We begin with the raw amino-acid sequence, 1324 residues long: Probable phosphoribosylformylglycinamidine synthase (1324 aa).

Residues 314-325, 394-396, and Ala681 contribute to the ATP site; these read GATTGTGGRIRD and SGF. The Mg(2+) site is built by Asp682, Glu721, Asn725, and Asp894. Ser896 contributes to the ATP binding site. Residues 1053-1295 enclose the Glutamine amidotransferase type-1 domain; the sequence is RVAIIREEGS…LTWQWAESSE (243 aa). Residue Cys1146 is the Nucleophile of the active site. Catalysis depends on residues His1280 and Asp1282.

This sequence in the N-terminal section; belongs to the FGAMS family.

The protein resides in the cytoplasm. The enzyme catalyses N(2)-formyl-N(1)-(5-phospho-beta-D-ribosyl)glycinamide + L-glutamine + ATP + H2O = 2-formamido-N(1)-(5-O-phospho-beta-D-ribosyl)acetamidine + L-glutamate + ADP + phosphate + H(+). It participates in purine metabolism; IMP biosynthesis via de novo pathway; 5-amino-1-(5-phospho-D-ribosyl)imidazole from N(2)-formyl-N(1)-(5-phospho-D-ribosyl)glycinamide: step 1/2. Phosphoribosylformylglycinamidine synthase involved in the purines biosynthetic pathway. Catalyzes the ATP-dependent conversion of formylglycinamide ribonucleotide (FGAR) and glutamine to yield formylglycinamidine ribonucleotide (FGAM) and glutamate. In Caenorhabditis elegans, this protein is Probable phosphoribosylformylglycinamidine synthase.